The primary structure comprises 435 residues: Protein translocase subunit SecY (435 aa).

The next 10 membrane-spanning stretches (helical) occupy residues 19 to 39, 68 to 88, 116 to 136, 147 to 167, 179 to 199, 216 to 236, 269 to 289, 311 to 331, 372 to 392, and 395 to 415; these read ILFTIFIILVFRIGTTITVPG, FSVFALGVSPYITASIVVQLL, YIALVLAFVQAIGITAGFDTL, VQTYALICVLLATGSMIVTWL, GVSMIIFAGIVSAIPDMIKGI, FIFVGILIVAVLLIIYFTTFV, VIPVIFASSITAAPAAIFQVV, ISGMFMYAFLIVLFTFFYTFV, VGSLFLGFISILPILAKDVFG, and DAVALGGTSLLIIISTGIEGM.

The protein belongs to the SecY/SEC61-alpha family. Component of the Sec protein translocase complex. Heterotrimer consisting of SecY, SecE and SecG subunits. The heterotrimers can form oligomers, although 1 heterotrimer is thought to be able to translocate proteins. Interacts with the ribosome. Interacts with SecDF, and other proteins may be involved. Interacts with SecA.

It is found in the cell membrane. Its function is as follows. The central subunit of the protein translocation channel SecYEG. Consists of two halves formed by TMs 1-5 and 6-10. These two domains form a lateral gate at the front which open onto the bilayer between TMs 2 and 7, and are clamped together by SecE at the back. The channel is closed by both a pore ring composed of hydrophobic SecY resides and a short helix (helix 2A) on the extracellular side of the membrane which forms a plug. The plug probably moves laterally to allow the channel to open. The ring and the pore may move independently. The chain is Protein translocase subunit SecY from Streptococcus sanguinis (strain SK36).